A 170-amino-acid chain; its full sequence is tRNA-splicing endonuclease (170 aa).

Active-site residues include Tyr-106, His-116, and Lys-147.

The protein belongs to the tRNA-intron endonuclease family. Archaeal short subfamily. Homotetramer; although the tetramer contains four active sites, only two participate in the cleavage. Therefore, it should be considered as a dimer of dimers.

It carries out the reaction pretRNA = a 3'-half-tRNA molecule with a 5'-OH end + a 5'-half-tRNA molecule with a 2',3'-cyclic phosphate end + an intron with a 2',3'-cyclic phosphate and a 5'-hydroxyl terminus.. Its function is as follows. Endonuclease that removes tRNA introns. Cleaves pre-tRNA at the 5'- and 3'-splice sites to release the intron. The products are an intron and two tRNA half-molecules bearing 2',3' cyclic phosphate and 5'-OH termini. Recognizes a pseudosymmetric substrate in which 2 bulged loops of 3 bases are separated by a stem of 4 bp. This is tRNA-splicing endonuclease from Methanothermobacter thermautotrophicus (strain ATCC 29096 / DSM 1053 / JCM 10044 / NBRC 100330 / Delta H) (Methanobacterium thermoautotrophicum).